The chain runs to 717 residues: Nuclear factor of activated T-cells, cytoplasmic 1 (717 aa).

The tract at residues 1 to 38 (MPNTSFPVPSKFPLGPPAAVCGSGETLRPAPPSGGTMK) is disordered. The tract at residues 120-125 (PRIEIT) is calcineurin-binding. Positions 128-220 (LGLHHGSGQF…CVSPKTTDPE (93 aa)) are transactivation domain A (TAD-A). The segment at 202 to 298 (PQTSPWQSPC…PHGSPRVSVT (97 aa)) is disordered. Positions 203-216 (QTSPWQSPCVSPKT) are enriched in polar residues. Tandem repeats lie at residues 205–221 (SPWQSPCVSPKTTDPEE) and 235–251 (SPRHSPSTSPRASITEE). Residues 205-300 (SPWQSPCVSP…GSPRVSVTED (96 aa)) are 3 X SP repeats. Phosphoserine is present on residues Ser235 and Ser239. Over residues 238-250 (HSPSTSPRASITE) the composition is skewed to polar residues. Ser247 is subject to Phosphoserine; by PKA. Positions 267–269 (KRK) match the Nuclear localization signal motif. Phosphoserine; by PKA occurs at positions 271 and 296. Copy 3 of the repeat occupies 284–300 (SPTPSPHGSPRVSVTED). Positions 312–323 (SAIVAAINALTT) match the Nuclear export signal motif. The region spanning 411-593 (PSLPALDWQL…NPIECSQRSA (183 aa)) is the RHD domain. The DNA-binding element occupies 440–447 (RAHYETEG). The Nuclear localization signal signature appears at 683 to 685 (KRK).

In terms of assembly, member of the multicomponent NFATC transcription complex that consists of at least two components, a pre-existing cytoplasmic component NFATC2 and an inducible nuclear component NFATC1. Other members such as NFATC4, NFATC3 or members of the activating protein-1 family, MAF, GATA4 and Cbp/p300 can also bind the complex. NFATC proteins bind to DNA as monomers. Interacts with HOMER2 and HOMER3; this interaction may compete with calcineurin/PPP3CA-binding and hence prevent NFATC1 dephosphorylation and activation. Interacts with TLE6/GRG6. Phosphorylated by NFATC-kinase and GSK3B; phosphorylation induces NFATC1 nuclear exit and dephosphorylation by calcineurin promotes nuclear import. Phosphorylation by PKA and DYRK2 negatively modulates nuclear accumulation, and promotes subsequent phosphorylation by GSK3B or casein kinase 1. In terms of tissue distribution, expressed in the submandibular gland (at protein level). Expressed in basal epidermal cells (at protein level). Expressed in spleen, skeletal muscle and skin. Express in the lung and thymus. Weakly expressed in heart, brain, liver and kidney. Not expressed in testis. Expressed in osteoclasts. Also expressed during TNFSF11/RANKL-induced differentiation of bone marrow-derived macrophages to osteoclasts.

The protein localises to the cytoplasm. It is found in the nucleus. Its function is as follows. Plays a role in the inducible expression of cytokine genes in T-cells, especially in the induction of the IL-2 or IL-4 gene transcription. Also controls gene expression in embryonic cardiac cells. Could regulate not only the activation and proliferation but also the differentiation and programmed death of T-lymphocytes as well as lymphoid and non-lymphoid cells. Required for osteoclastogenesis and regulates many genes important for osteoclast differentiation and function. In Mus musculus (Mouse), this protein is Nuclear factor of activated T-cells, cytoplasmic 1 (Nfatc1).